The sequence spans 753 residues: Photosystem I P700 chlorophyll a apoprotein A1 (753 aa).

8 helical membrane-spanning segments follow: residues 72 to 95, 158 to 181, 197 to 221, 293 to 311, 350 to 373, 389 to 415, 437 to 459, and 534 to 552; these read IFSAHFGHLAIIFVWLSGAYFHGA, LYCTAIGGLVMAALMMFAGWFHYH, MNHHLAGLLGLGCLSWAGHQIHVSL, TAHHHLALAVLFIVAGHMY, WHAQLAINLAMLGSLSIIVAHHMY, LSLFTHHMWIGGFLIVGAGAHGAIFMV, AIISHLNWVCIFLGFHSFGLYVH, and FMVHHIHAFTIHVTALILL. 2 residues coordinate [4Fe-4S] cluster: Cys576 and Cys585. Helical transmembrane passes span 592–613 and 667–689; these read HVFLGLFWMYNSLSIVIFHFSW and LSAYGLLFLGAHFIWAFSLMFLF. A chlorophyll a'-binding site is contributed by His678. 2 residues coordinate chlorophyll a: Met686 and Tyr694. Trp695 provides a ligand contact to phylloquinone. The chain crosses the membrane as a helical span at residues 727–747; it reads AVGVAHYLLGGIVTTWAFFLA.

It belongs to the PsaA/PsaB family. The PsaA/B heterodimer binds the P700 chlorophyll special pair and subsequent electron acceptors. PSI consists of a core antenna complex that captures photons, and an electron transfer chain that converts photonic excitation into a charge separation. The cyanobacterial PSI reaction center is composed of one copy each of PsaA,B,C,D,E,F,I,J,K,L,M and X, and forms trimeric complexes. PSI electron transfer chain: 5 chlorophyll a, 1 chlorophyll a', 2 phylloquinones and 3 4Fe-4S clusters. PSI core antenna: 90 chlorophyll a, 22 carotenoids, 3 phospholipids and 1 galactolipid. P700 is a chlorophyll a/chlorophyll a' dimer, A0 is one or more chlorophyll a, A1 is one or both phylloquinones and FX is a shared 4Fe-4S iron-sulfur center. serves as cofactor.

The protein resides in the cellular thylakoid membrane. The catalysed reaction is reduced [plastocyanin] + hnu + oxidized [2Fe-2S]-[ferredoxin] = oxidized [plastocyanin] + reduced [2Fe-2S]-[ferredoxin]. PsaA and PsaB bind P700, the primary electron donor of photosystem I (PSI), as well as the electron acceptors A0, A1 and FX. PSI is a plastocyanin/cytochrome c6-ferredoxin oxidoreductase, converting photonic excitation into a charge separation, which transfers an electron from the donor P700 chlorophyll pair to the spectroscopically characterized acceptors A0, A1, FX, FA and FB in turn. Oxidized P700 is reduced on the lumenal side of the thylakoid membrane by plastocyanin or cytochrome c6. This chain is Photosystem I P700 chlorophyll a apoprotein A1, found in Trichodesmium erythraeum (strain IMS101).